Here is a 327-residue protein sequence, read N- to C-terminus: Thiamine-binding periplasmic protein (327 aa).

A signal peptide spans 1-18 (MLKKYLPLLLLCAAPAFA). Residues 59 to 60 (DG), 161 to 162 (ST), tryptophan 197, and 215 to 218 (YTTS) contribute to the thiamine site.

The protein belongs to the bacterial solute-binding protein 1 family. The complex is composed of two ATP-binding proteins (ThiQ), two transmembrane proteins (ThiP) and a solute-binding protein (ThiB).

The protein localises to the periplasm. Its function is as follows. Part of the ABC transporter complex ThiBPQ involved in thiamine import. Is also involved in thiamine pyrophosphate transport. The protein is Thiamine-binding periplasmic protein of Salmonella typhimurium (strain LT2 / SGSC1412 / ATCC 700720).